A 160-amino-acid polypeptide reads, in one-letter code: Transcription antitermination protein NusB (160 aa).

This sequence belongs to the NusB family.

Functionally, involved in transcription antitermination. Required for transcription of ribosomal RNA (rRNA) genes. Binds specifically to the boxA antiterminator sequence of the ribosomal RNA (rrn) operons. This Rhizobium meliloti (strain 1021) (Ensifer meliloti) protein is Transcription antitermination protein NusB.